We begin with the raw amino-acid sequence, 499 residues long: Probable mitochondrial-processing peptidase subunit alpha-2, chloroplastic/mitochondrial (499 aa).

It belongs to the peptidase M16 family. Heterodimer of alpha and beta subunits, forming the mitochondrial processing protease (MPP) in which subunit alpha is involved in substrate recognition and binding and subunit beta is the catalytic subunit. Component of the ubiquinol-cytochrome c oxidoreductase (cytochrome b-c1 complex, complex III, CIII), a multisubunit enzyme composed of 10 subunits. The complex is composed of 3 respiratory subunits cytochrome b (MT-CYB), cytochrome c1 (CYC1-1 or CYC1-2) and Rieske protein (UCR1-1 or UCR1-2), 2 core protein subunits MPPalpha1 (or MPPalpha2) and MPPB, and 5 low-molecular weight protein subunits QCR7-1 (or QCR7-2), UCRQ-1 (or UCRQ-2), QCR9, UCRY and probably QCR6-1 (or QCR6-2). The complex exists as an obligatory dimer and forms supercomplexes (SCs) in the inner mitochondrial membrane with NADH-ubiquinone oxidoreductase (complex I, CI), resulting in different assemblies (supercomplexes SCI(1)III(2) and SCI(2)III(4)). Interacts with TIM23-2.

The protein localises to the plastid. The protein resides in the chloroplast stroma. Its subcellular location is the mitochondrion matrix. It is found in the mitochondrion inner membrane. Its function is as follows. Substrate recognition and binding subunit of the essential mitochondrial processing protease (MPP), which cleaves the mitochondrial sequence off newly imported precursors proteins. Component of the ubiquinol-cytochrome c oxidoreductase, a multisubunit transmembrane complex that is part of the mitochondrial electron transport chain which drives oxidative phosphorylation. The respiratory chain contains 3 multisubunit complexes succinate dehydrogenase (complex II, CII), ubiquinol-cytochrome c oxidoreductase (cytochrome b-c1 complex, complex III, CIII) and cytochrome c oxidase (complex IV, CIV), that cooperate to transfer electrons derived from NADH and succinate to molecular oxygen, creating an electrochemical gradient over the inner membrane that drives transmembrane transport and the ATP synthase. The cytochrome b-c1 complex catalyzes electron transfer from ubiquinol to cytochrome c, linking this redox reaction to translocation of protons across the mitochondrial inner membrane, with protons being carried across the membrane as hydrogens on the quinol. In the process called Q cycle, 2 protons are consumed from the matrix, 4 protons are released into the intermembrane space and 2 electrons are passed to cytochrome c. This Arabidopsis thaliana (Mouse-ear cress) protein is Probable mitochondrial-processing peptidase subunit alpha-2, chloroplastic/mitochondrial (MPPalpha2).